The primary structure comprises 378 residues: Carbazole 1,9a-dioxygenase, terminal oxygenase component CarAa (378 aa).

The 107-residue stretch at 29-135 folds into the Rieske domain; it reads WYPVRLASEI…VEEAKGLIFV (107 aa). Residues C69, H71, C90, and H93 each coordinate [2Fe-2S] cluster.

Homotrimer. Carbazole 1,9a-dioxygenase complex consists of a terminal oxygenase component CarAa, a ferredoxin reductase component fdr and a ferredoxin component CarAc. [2Fe-2S] cluster is required as a cofactor.

The enzyme catalyses 9H-carbazole + NADH + O2 + H(+) = 2'-aminobiphenyl-2,3-diol + NAD(+). The catalysed reaction is 9H-carbazole + NADPH + O2 + H(+) = 2'-aminobiphenyl-2,3-diol + NADP(+). Part of the multicomponent carbazole 1,9a-dioxygenase (CARDO), that converts carbazole (CAR) into 2-aminobiphenyl-2,3-diol. Catalyzes the dioxygenation at the angular (C-9a) and adjacent (C-1) positions of carbazole to yield a highly unstable cis-hydrodiol intermediate which is spontaneously converted to 2-aminobiphenyl-2,3-diol. The polypeptide is Carbazole 1,9a-dioxygenase, terminal oxygenase component CarAa (carAa) (Sphingomonas sp).